Here is a 43-residue protein sequence, read N- to C-terminus: Protein PsbN (43 aa).

Residues 7-27 (LIVFIASLLLGVTGYSVYTAF) form a helical membrane-spanning segment.

It belongs to the PsbN family.

The protein resides in the plastid. It is found in the chloroplast thylakoid membrane. Its function is as follows. May play a role in photosystem I and II biogenesis. The protein is Protein PsbN of Rhodomonas salina (Cryptomonas salina).